The following is a 474-amino-acid chain: Pyruvate kinase (474 aa).

Arg-37 is a binding site for substrate. K(+) is bound by residues Asn-39, Ser-41, and Asp-71. Residue 39–42 (NFSH) participates in ATP binding. The ATP site is built by Arg-78 and Lys-160. Residue Glu-222 coordinates Mg(2+). 3 residues coordinate substrate: Gly-245, Asp-246, and Thr-278. Asp-246 provides a ligand contact to Mg(2+).

This sequence belongs to the pyruvate kinase family. Homotetramer. Mg(2+) serves as cofactor. Requires K(+) as cofactor.

The catalysed reaction is pyruvate + ATP = phosphoenolpyruvate + ADP + H(+). It participates in carbohydrate degradation; glycolysis; pyruvate from D-glyceraldehyde 3-phosphate: step 5/5. This Agrobacterium vitis (Rhizobium vitis) protein is Pyruvate kinase (ttuE).